A 325-amino-acid chain; its full sequence is UPF0324 membrane protein Bd1437 (325 aa).

Helical transmembrane passes span 21–43, 58–80, 87–105, 115–137, 144–166, 211–230, 243–260, and 302–324; these read IAAL…GIVL, YTHH…MVVG, IGYT…MLIG, STLI…APTI, VSVA…PWIG, ARAL…YFRG, PWFI…TWIP, and LQGV…IGWI.

It belongs to the UPF0324 family.

The protein localises to the cell membrane. The sequence is that of UPF0324 membrane protein Bd1437 from Bdellovibrio bacteriovorus (strain ATCC 15356 / DSM 50701 / NCIMB 9529 / HD100).